The sequence spans 363 residues: Phosphoserine aminotransferase (363 aa).

Position 42 (Arg-42) interacts with L-glutamate. Residues 76-77 (GR), Trp-102, Thr-156, Asp-175, and Gln-198 contribute to the pyridoxal 5'-phosphate site. Residue Lys-199 is modified to N6-(pyridoxal phosphate)lysine. 240–241 (NT) contributes to the pyridoxal 5'-phosphate binding site.

It belongs to the class-V pyridoxal-phosphate-dependent aminotransferase family. SerC subfamily. Homodimer. Requires pyridoxal 5'-phosphate as cofactor.

The protein resides in the cytoplasm. It catalyses the reaction O-phospho-L-serine + 2-oxoglutarate = 3-phosphooxypyruvate + L-glutamate. The catalysed reaction is 4-(phosphooxy)-L-threonine + 2-oxoglutarate = (R)-3-hydroxy-2-oxo-4-phosphooxybutanoate + L-glutamate. It functions in the pathway amino-acid biosynthesis; L-serine biosynthesis; L-serine from 3-phospho-D-glycerate: step 2/3. It participates in cofactor biosynthesis; pyridoxine 5'-phosphate biosynthesis; pyridoxine 5'-phosphate from D-erythrose 4-phosphate: step 3/5. Catalyzes the reversible conversion of 3-phosphohydroxypyruvate to phosphoserine and of 3-hydroxy-2-oxo-4-phosphonooxybutanoate to phosphohydroxythreonine. The polypeptide is Phosphoserine aminotransferase (Shewanella denitrificans (strain OS217 / ATCC BAA-1090 / DSM 15013)).